The primary structure comprises 401 residues: Phosphoglycerate kinase, cytosolic (401 aa).

Residues alanine 24, aspartate 25, asparagine 27, arginine 41, serine 63, histidine 64, glycine 66, arginine 67, arginine 122, histidine 154, and arginine 155 each coordinate (2R)-3-phosphoglycerate. Glycine 200 contributes to the ADP binding site. Residue glycine 200 coordinates CDP. Positions 202 and 206 each coordinate AMP. Residue lysine 206 coordinates ATP. Glycine 224 is an ADP binding site. Residue glycine 224 participates in CDP binding. The AMP site is built by glycine 225 and glycine 297. Residues glycine 225 and glycine 297 each contribute to the ATP site. CDP is bound by residues glycine 322 and phenylalanine 327. Phenylalanine 327 is a binding site for ADP. Residue glutamate 328 participates in AMP binding. 3 residues coordinate ATP: glutamate 328, aspartate 359, and serine 360. Aspartate 359 serves as a coordination point for Mg(2+).

The protein belongs to the phosphoglycerate kinase family. Monomer. The cofactor is Mg(2+).

The protein resides in the cytoplasm. The enzyme catalyses (2R)-3-phosphoglycerate + ATP = (2R)-3-phospho-glyceroyl phosphate + ADP. It participates in carbohydrate degradation; glycolysis; pyruvate from D-glyceraldehyde 3-phosphate: step 2/5. The sequence is that of Phosphoglycerate kinase, cytosolic from Triticum aestivum (Wheat).